A 157-amino-acid chain; its full sequence is MSNKVIDTVSEMVQPILDNLQLELVDIEFVKEGQSWFLRVFIDSDDGVDIEECAKVSEALSEKLDEADPIKQNYFLEVSSPGAERPLKKEADFMKALGKNVYIKTYEPIEGNKEFEGELSAFDGENVEVTVMIKTRRKTINIPYDKVAKARLAVSFN.

This sequence belongs to the RimP family.

The protein localises to the cytoplasm. In terms of biological role, required for maturation of 30S ribosomal subunits. The polypeptide is Ribosome maturation factor RimP (Bacillus licheniformis (strain ATCC 14580 / DSM 13 / JCM 2505 / CCUG 7422 / NBRC 12200 / NCIMB 9375 / NCTC 10341 / NRRL NRS-1264 / Gibson 46)).